A 466-amino-acid chain; its full sequence is Cysteine--tRNA ligase (466 aa).

Cysteine 27 is a binding site for Zn(2+). The 'HIGH' region motif lies at 29–39 (PTVYDDAHLGH). Zn(2+) contacts are provided by cysteine 208, histidine 238, and glutamate 242. The short motif at 270 to 274 (KMSKS) is the 'KMSKS' region element. Residue lysine 273 participates in ATP binding.

Belongs to the class-I aminoacyl-tRNA synthetase family. Monomer. Requires Zn(2+) as cofactor.

It is found in the cytoplasm. The enzyme catalyses tRNA(Cys) + L-cysteine + ATP = L-cysteinyl-tRNA(Cys) + AMP + diphosphate. The polypeptide is Cysteine--tRNA ligase (Sulfurimonas denitrificans (strain ATCC 33889 / DSM 1251) (Thiomicrospira denitrificans (strain ATCC 33889 / DSM 1251))).